The primary structure comprises 298 residues: Syntenin-1 (298 aa).

Serine 2 carries the N-acetylserine modification. The interval 2–60 is interaction with PDCD6IP; that stretch reads SLYPSLEDLKVDKVIQAQTAFSANPANPAILSEASAPIPHDGNLYPRLYPELSQYMGLS. 3 consecutive short sequence motifs (LYPX(n)L motif) follow at residues 3 to 7, 45 to 49, and 49 to 53; these read LYPSL, LYPRL, and LYPEL. Serine 6 carries the phosphoserine modification. Tyrosine 46 bears the Phosphotyrosine mark. 2 PDZ domains span residues 114–193 and 198–273; these read EVIL…IRDR and TITM…MPAF. A 1,2-diacyl-sn-glycero-3-phospho-(1D-myo-inositol-4,5-bisphosphate) is bound by residues asparagine 215 and 250 to 251; that span reads KD.

As to quaternary structure, monomer and homodimer. Interacts with SDC1, SDC2, SDC3, SDC4, NRXN2, EPHA7, EPHB1, NF2 isoform 1, TGFA and IL5RA. Interacts with NFASC and PTPRJ. Interacts with SDCBP2. Interacts with PDCD6IP. Forms a complex with PDCD6IP and SDC2. Interacts (via C-terminus) with TGFBR1. Binds to FZD7; this interaction is increased by inositol trisphosphate (IP3). Interacts with SMO. Phosphorylated on tyrosine residues. Expressed in lung cancers, including adenocarcinoma, squamous cell carcinoma and small-cell carcinoma (at protein level). Widely expressed. Expressed in fetal kidney, liver, lung and brain. In adult highest expression in heart and placenta.

It is found in the cell junction. The protein resides in the focal adhesion. Its subcellular location is the adherens junction. It localises to the cell membrane. The protein localises to the endoplasmic reticulum membrane. It is found in the nucleus. The protein resides in the melanosome. Its subcellular location is the cytoplasm. It localises to the cytosol. The protein localises to the cytoskeleton. It is found in the secreted. The protein resides in the extracellular exosome. Its subcellular location is the membrane raft. Multifunctional adapter protein involved in diverse array of functions including trafficking of transmembrane proteins, neuro and immunomodulation, exosome biogenesis, and tumorigenesis. Positively regulates TGFB1-mediated SMAD2/3 activation and TGFB1-induced epithelial-to-mesenchymal transition (EMT) and cell migration in various cell types. May increase TGFB1 signaling by enhancing cell-surface expression of TGFR1 by preventing the interaction between TGFR1 and CAV1 and subsequent CAV1-dependent internalization and degradation of TGFR1. In concert with SDC1/4 and PDCD6IP, regulates exosome biogenesis. Regulates migration, growth, proliferation, and cell cycle progression in a variety of cancer types. In adherens junctions may function to couple syndecans to cytoskeletal proteins or signaling components. Seems to couple transcription factor SOX4 to the IL-5 receptor (IL5RA). May also play a role in vesicular trafficking. Seems to be required for the targeting of TGFA to the cell surface in the early secretory pathway. This chain is Syntenin-1 (SDCBP), found in Homo sapiens (Human).